The following is a 169-amino-acid chain: Endoribonuclease YbeY (169 aa).

3 residues coordinate Zn(2+): H130, H134, and H140.

The protein belongs to the endoribonuclease YbeY family. The cofactor is Zn(2+).

It is found in the cytoplasm. Single strand-specific metallo-endoribonuclease involved in late-stage 70S ribosome quality control and in maturation of the 3' terminus of the 16S rRNA. The sequence is that of Endoribonuclease YbeY from Neisseria meningitidis serogroup B (strain ATCC BAA-335 / MC58).